Here is a 112-residue protein sequence, read N- to C-terminus: Probable prefoldin subunit 1 (112 aa).

The protein belongs to the prefoldin subunit beta family. In terms of assembly, heterohexamer of two PFD-alpha type and four PFD-beta type subunits.

Its function is as follows. Binds specifically to cytosolic chaperonin (c-CPN) and transfers target proteins to it. Binds to nascent polypeptide chain and promotes folding in an environment in which there are many competing pathways for nonnative proteins. In Schizosaccharomyces pombe (strain 972 / ATCC 24843) (Fission yeast), this protein is Probable prefoldin subunit 1.